Reading from the N-terminus, the 399-residue chain is Protein DDI1 homolog 2 (399 aa).

The Ubiquitin-like domain maps to 1 to 81; the sequence is MLLTVYCVRR…VILRQKENAD (81 aa). The tract at residues 99–134 is disordered; the sequence is IAVPGTSNPQQRQLPRTQAQHSSPGEMASSPQGLDN. Over residues 103–131 the composition is skewed to polar residues; it reads GTSNPQQRQLPRTQAQHSSPGEMASSPQG. Phosphothreonine is present on Thr104. 4 positions are modified to phosphoserine: Ser121, Ser128, Ser150, and Ser194. Asp252 is an active-site residue. The short motif at 376–395 is the Ubiquitin-binding element; that stretch reads EEIADQELAEAIQKSAEDAE.

The protein belongs to the DDI1 family. As to quaternary structure, homodimer.

The protein resides in the cytoplasm. It localises to the cytosol. Its subcellular location is the chromosome. Its function is as follows. Aspartic protease that mediates the cleavage of NFE2L1/NRF1 at 'Leu-104', thereby promoting release of NFE2L1/NRF1 from the endoplasmic reticulum membrane. Ubiquitination of NFE2L1/NRF1 is a prerequisite for cleavage, suggesting that DDI2 specifically recognizes and binds ubiquitinated NFE2L1/NRF1. Seems to act as a proteasomal shuttle which links the proteasome and replication fork proteins like RTF2. Required, with DDI1, for cellular survival following replication stress. Together or redudantly with DDI1, removes RTF2 from stalled forks to allow cell cycle progression after replication stress and maintains genome integrity. This chain is Protein DDI1 homolog 2, found in Mus musculus (Mouse).